A 56-amino-acid polypeptide reads, in one-letter code: MAVPKKKKSKSKRNQRHAVWKGKAAIAAQKAISLGKSVLTGKAQGFVYPIEEEEEE.

This sequence belongs to the bacterial ribosomal protein bL32 family.

This Prochlorococcus marinus (strain MIT 9301) protein is Large ribosomal subunit protein bL32.